The sequence spans 214 residues: Probable nicotinate-nucleotide adenylyltransferase (214 aa).

Belongs to the NadD family.

It catalyses the reaction nicotinate beta-D-ribonucleotide + ATP + H(+) = deamido-NAD(+) + diphosphate. It functions in the pathway cofactor biosynthesis; NAD(+) biosynthesis; deamido-NAD(+) from nicotinate D-ribonucleotide: step 1/1. Its function is as follows. Catalyzes the reversible adenylation of nicotinate mononucleotide (NaMN) to nicotinic acid adenine dinucleotide (NaAD). This chain is Probable nicotinate-nucleotide adenylyltransferase, found in Mycobacterium tuberculosis (strain ATCC 25177 / H37Ra).